Reading from the N-terminus, the 390-residue chain is Probable purine permease 10 (390 aa).

Transmembrane regions (helical) follow at residues 44 to 64 (WLRV…ATIL), 78 to 98 (LATV…ILSF), 117 to 137 (VLVY…YSIG), 140 to 160 (YLPV…NAFF), 169 to 189 (LTPI…LLAF), 204 to 224 (YVKG…VLSL), 241 to 261 (VMDM…VGLF), 287 to 307 (LVWT…LIFE), 312 to 332 (FSNA…VIIF), and 336 to 356 (MNGL…SYVY). The disordered stretch occupies residues 370-390 (EITTTESPDPPEAEESTWQSK).

Belongs to the purine permeases (TC 2.A.7.14) family.

Its subcellular location is the membrane. This is Probable purine permease 10 (PUP10) from Arabidopsis thaliana (Mouse-ear cress).